Here is a 172-residue protein sequence, read N- to C-terminus: Adenine phosphoribosyltransferase (172 aa).

This sequence belongs to the purine/pyrimidine phosphoribosyltransferase family. Homodimer.

Its subcellular location is the cytoplasm. The catalysed reaction is AMP + diphosphate = 5-phospho-alpha-D-ribose 1-diphosphate + adenine. It participates in purine metabolism; AMP biosynthesis via salvage pathway; AMP from adenine: step 1/1. Functionally, catalyzes a salvage reaction resulting in the formation of AMP, that is energically less costly than de novo synthesis. In Pediococcus pentosaceus (strain ATCC 25745 / CCUG 21536 / LMG 10740 / 183-1w), this protein is Adenine phosphoribosyltransferase.